Here is a 622-residue protein sequence, read N- to C-terminus: ABC transporter permease protein YxdM (622 aa).

10 consecutive transmembrane segments (helical) span residues 20–40, 56–76, 118–138, 154–174, 195–215, 219–239, 279–299, 498–518, 558–578, and 590–610; these read AFFL…MFLF, GLTA…LYSV, AGII…AYIL, ITAC…ILFV, PSVL…GMVL, VHGA…YFFF, LFFI…VLAM, TVQL…VFFV, IQLA…TLFA, and VAGP…LFFL.

The protein belongs to the ABC-4 integral membrane protein family. The complex is composed of two ATP-binding proteins (YxdL) and two transmembrane proteins (YxdM).

It is found in the cell membrane. In terms of biological role, part of the ABC transporter complex YxdLM which could be involved in peptide resistance. The sequence is that of ABC transporter permease protein YxdM (yxdM) from Bacillus subtilis (strain 168).